Consider the following 369-residue polypeptide: tRNA-specific 2-thiouridylase MnmA (369 aa).

ATP-binding positions include 12 to 19 (GMSGGVDS) and Met38. The interaction with target base in tRNA stretch occupies residues 98 to 100 (NPD). Cys103 functions as the Nucleophile in the catalytic mechanism. Residues Cys103 and Cys200 are joined by a disulfide bond. Gly128 contacts ATP. Residues 150-152 (KDQ) are interaction with tRNA. Residue Cys200 is the Cysteine persulfide intermediate of the active site. The tract at residues 312–313 (RY) is interaction with tRNA.

This sequence belongs to the MnmA/TRMU family. As to quaternary structure, interacts with TusE.

Its subcellular location is the cytoplasm. The catalysed reaction is S-sulfanyl-L-cysteinyl-[protein] + uridine(34) in tRNA + AH2 + ATP = 2-thiouridine(34) in tRNA + L-cysteinyl-[protein] + A + AMP + diphosphate + H(+). Its function is as follows. Catalyzes the 2-thiolation of uridine at the wobble position (U34) of tRNA(Lys), tRNA(Glu) and tRNA(Gln), leading to the formation of s(2)U34, the first step of tRNA-mnm(5)s(2)U34 synthesis. Sulfur is provided by IscS, via a sulfur-relay system. Binds ATP and its substrate tRNAs. This chain is tRNA-specific 2-thiouridylase MnmA, found in Sodalis glossinidius (strain morsitans).